A 267-amino-acid polypeptide reads, in one-letter code: MFSTGTVWKNVAAVRQRAPIIHSITNFVVMNTTANALLAAGASPIMAHAPEEMAEMAGIASALVLNIGTLTKPWVESMMLAGMAARERRLPVVLDPVGAGASSLRTTTALEILEKVRPAVVRGNGSEILALAGAAGDTRGVDSARTAHEAVDGARALARRYGAVVVVSGAEDVVTDGDALWLVRGGSPLMPRVTGMGCTATVLVAAHVAVAADVLEGAVTGMAAMSAAGALAARRSQGPGSFQVAFLDVLHSLDLVTVRDEVEVVRA.

Methionine 46 lines the substrate pocket. ATP contacts are provided by arginine 122 and serine 168. Glycine 195 lines the substrate pocket.

Belongs to the Thz kinase family. Mg(2+) is required as a cofactor.

The enzyme catalyses 5-(2-hydroxyethyl)-4-methylthiazole + ATP = 4-methyl-5-(2-phosphooxyethyl)-thiazole + ADP + H(+). It participates in cofactor biosynthesis; thiamine diphosphate biosynthesis; 4-methyl-5-(2-phosphoethyl)-thiazole from 5-(2-hydroxyethyl)-4-methylthiazole: step 1/1. In terms of biological role, catalyzes the phosphorylation of the hydroxyl group of 4-methyl-5-beta-hydroxyethylthiazole (THZ). The sequence is that of Hydroxyethylthiazole kinase from Nitratidesulfovibrio vulgaris (strain DP4) (Desulfovibrio vulgaris).